Consider the following 305-residue polypeptide: tRNA dimethylallyltransferase 1 (305 aa).

10–17 (GPTASGKT) lines the ATP pocket. 12–17 (TASGKT) contacts substrate. Positions 35-38 (DSRQ) are interaction with substrate tRNA.

Belongs to the IPP transferase family. In terms of assembly, monomer. Mg(2+) is required as a cofactor.

The enzyme catalyses adenosine(37) in tRNA + dimethylallyl diphosphate = N(6)-dimethylallyladenosine(37) in tRNA + diphosphate. Catalyzes the transfer of a dimethylallyl group onto the adenine at position 37 in tRNAs that read codons beginning with uridine, leading to the formation of N6-(dimethylallyl)adenosine (i(6)A). This chain is tRNA dimethylallyltransferase 1, found in Syntrophus aciditrophicus (strain SB).